The primary structure comprises 92 residues: DNA-directed RNA polymerase subunit Rpo11 (92 aa).

This sequence belongs to the archaeal Rpo11/eukaryotic RPB11/RPC19 RNA polymerase subunit family. As to quaternary structure, part of the RNA polymerase complex.

Its subcellular location is the cytoplasm. It catalyses the reaction RNA(n) + a ribonucleoside 5'-triphosphate = RNA(n+1) + diphosphate. In terms of biological role, DNA-dependent RNA polymerase (RNAP) catalyzes the transcription of DNA into RNA using the four ribonucleoside triphosphates as substrates. This Saccharolobus islandicus (strain Y.N.15.51 / Yellowstone #2) (Sulfolobus islandicus) protein is DNA-directed RNA polymerase subunit Rpo11.